Consider the following 573-residue polypeptide: Glutamate--tRNA ligase (573 aa).

Residues 106–116 carry the 'HIGH' region motif; that stretch reads PNPDGAFHLGN.

This sequence belongs to the class-I aminoacyl-tRNA synthetase family. Glutamate--tRNA ligase type 2 subfamily.

The protein localises to the cytoplasm. The enzyme catalyses tRNA(Glu) + L-glutamate + ATP = L-glutamyl-tRNA(Glu) + AMP + diphosphate. Catalyzes the attachment of glutamate to tRNA(Glu) in a two-step reaction: glutamate is first activated by ATP to form Glu-AMP and then transferred to the acceptor end of tRNA(Glu). The protein is Glutamate--tRNA ligase of Thermococcus onnurineus (strain NA1).